We begin with the raw amino-acid sequence, 154 residues long: Stigma-specific STIG1-like protein 3 (154 aa).

The first 23 residues, Met1–Ala23, serve as a signal peptide directing secretion.

It belongs to the STIG1 family.

The polypeptide is Stigma-specific STIG1-like protein 3 (Arabidopsis thaliana (Mouse-ear cress)).